Here is a 295-residue protein sequence, read N- to C-terminus: Fatty acid desaturase 4-like 1, chloroplastic (295 aa).

Residues 1-29 (MAVSFQTKNPLRPITNIPRSYGPTRVRVT) constitute a chloroplast transit peptide. The next 3 helical transmembrane spans lie at 72–92 (WVAAGSTTIFASFAKSIIGGF), 102–122 (LACYAGYVFADLGSGVYHWAI), and 175–195 (LAINNPLFHSFVSTFAFCILL).

This sequence belongs to the fatty acid desaturase CarF family.

The protein localises to the plastid. Its subcellular location is the chloroplast membrane. It functions in the pathway lipid metabolism; fatty acid metabolism. Fatty acid desaturase involved in the production of chloroplast-specific phosphatidylglycerol molecular species. Catalyzes the formation of a trans double bond introduced close to the carboxyl group of palmitic acid, which is specifically esterified to the sn-2 glyceryl carbon of phosphatidylglycerol. The protein is Fatty acid desaturase 4-like 1, chloroplastic (FAD4L1) of Arabidopsis thaliana (Mouse-ear cress).